The following is a 120-amino-acid chain: Large ribosomal subunit protein uL18 (120 aa).

Residues 1–23 (MKLSRKESVRRRHQRVRRKINGT) are disordered. Positions 8–20 (SVRRRHQRVRRKI) are enriched in basic residues.

It belongs to the universal ribosomal protein uL18 family. As to quaternary structure, part of the 50S ribosomal subunit; part of the 5S rRNA/L5/L18/L25 subcomplex. Contacts the 5S and 23S rRNAs.

This is one of the proteins that bind and probably mediate the attachment of the 5S RNA into the large ribosomal subunit, where it forms part of the central protuberance. This Microcystis aeruginosa (strain NIES-843 / IAM M-2473) protein is Large ribosomal subunit protein uL18.